The primary structure comprises 238 residues: Ribonuclease PH (238 aa).

Phosphate-binding positions include Arg-86 and 124-126 (GTR).

This sequence belongs to the RNase PH family. As to quaternary structure, homohexameric ring arranged as a trimer of dimers.

It carries out the reaction tRNA(n+1) + phosphate = tRNA(n) + a ribonucleoside 5'-diphosphate. In terms of biological role, phosphorolytic 3'-5' exoribonuclease that plays an important role in tRNA 3'-end maturation. Removes nucleotide residues following the 3'-CCA terminus of tRNAs; can also add nucleotides to the ends of RNA molecules by using nucleoside diphosphates as substrates, but this may not be physiologically important. Probably plays a role in initiation of 16S rRNA degradation (leading to ribosome degradation) during starvation. The protein is Ribonuclease PH of Geobacter metallireducens (strain ATCC 53774 / DSM 7210 / GS-15).